A 122-amino-acid chain; its full sequence is MKKFNKDIGTYCEKLSCDYLIEHNFKILECNFKNFLGEIDIICIKNSILIIIEVKGRYNYEFGLPKESVSISKQKNIIKVTKSYINYKKLYNFNVRFDVIEIYLNKLNSSYKINHIKDAFRT.

It belongs to the UPF0102 family.

This chain is UPF0102 protein CLL_A1253, found in Clostridium botulinum (strain Eklund 17B / Type B).